The chain runs to 486 residues: Aspartyl/glutamyl-tRNA(Asn/Gln) amidotransferase subunit B (486 aa).

The protein belongs to the GatB/GatE family. GatB subfamily. As to quaternary structure, heterotrimer of A, B and C subunits.

It catalyses the reaction L-glutamyl-tRNA(Gln) + L-glutamine + ATP + H2O = L-glutaminyl-tRNA(Gln) + L-glutamate + ADP + phosphate + H(+). The enzyme catalyses L-aspartyl-tRNA(Asn) + L-glutamine + ATP + H2O = L-asparaginyl-tRNA(Asn) + L-glutamate + ADP + phosphate + 2 H(+). Its function is as follows. Allows the formation of correctly charged Asn-tRNA(Asn) or Gln-tRNA(Gln) through the transamidation of misacylated Asp-tRNA(Asn) or Glu-tRNA(Gln) in organisms which lack either or both of asparaginyl-tRNA or glutaminyl-tRNA synthetases. The reaction takes place in the presence of glutamine and ATP through an activated phospho-Asp-tRNA(Asn) or phospho-Glu-tRNA(Gln). The chain is Aspartyl/glutamyl-tRNA(Asn/Gln) amidotransferase subunit B from Azoarcus sp. (strain BH72).